Consider the following 461-residue polypeptide: Photosystem II CP43 reaction center protein (461 aa).

The propeptide occupies 1–2 (ME). Thr-3 is subject to N-acetylthreonine. Thr-3 bears the Phosphothreonine mark. 5 consecutive transmembrane segments (helical) span residues 57–81 (LFEV…PHLA), 122–143 (LIGP…KDKN), 166–188 (KAMY…RVIT), 243–263 (KPFA…LSYS), and 279–300 (WFNN…ASQA). A [CaMn4O5] cluster-binding site is contributed by Glu-355. Residues 435–459 (RARAAAAGFEKGIERETEPALSMKP) form a helical membrane-spanning segment.

This sequence belongs to the PsbB/PsbC family. PsbC subfamily. PSII is composed of 1 copy each of membrane proteins PsbA, PsbB, PsbC, PsbD, PsbE, PsbF, PsbH, PsbI, PsbJ, PsbK, PsbL, PsbM, PsbT, PsbX, PsbY, PsbZ, Psb30/Ycf12, at least 3 peripheral proteins of the oxygen-evolving complex and a large number of cofactors. It forms dimeric complexes. It depends on Binds multiple chlorophylls and provides some of the ligands for the Ca-4Mn-5O cluster of the oxygen-evolving complex. It may also provide a ligand for a Cl- that is required for oxygen evolution. PSII binds additional chlorophylls, carotenoids and specific lipids. as a cofactor.

The protein localises to the plastid. It localises to the chloroplast thylakoid membrane. One of the components of the core complex of photosystem II (PSII). It binds chlorophyll and helps catalyze the primary light-induced photochemical processes of PSII. PSII is a light-driven water:plastoquinone oxidoreductase, using light energy to abstract electrons from H(2)O, generating O(2) and a proton gradient subsequently used for ATP formation. This Chlorokybus atmophyticus (Soil alga) protein is Photosystem II CP43 reaction center protein.